Reading from the N-terminus, the 2196-residue chain is Non-reducing polyketide synthase CTB1 (2196 aa).

Residues 11-250 (AFGDQTYDCS…TRLPITAPYH (240 aa)) are N-terminal acylcarrier protein transacylase domain (SAT). Positions 381–814 (KSPIAILAAS…GGNTCLVLED (434 aa)) constitute a Ketosynthase family 3 (KS3) domain. Active-site for beta-ketoacyl synthase activity residues include C553, H688, and H733. Residues 922-1223 (AFTGQGSAFA…QTFASINKDK (302 aa)) form a malonyl-CoA:ACP transacylase (MAT) domain region. The segment at 1298–1611 (SSSIHKVITN…VPKRLMHYIV (314 aa)) is product template (PT) domain. The interval 1302–1441 (HKVITNTITA…EKTALKSAAL (140 aa)) is N-terminal hotdog fold. Positions 1302-1608 (HKVITNTITA…LQGVPKRLMH (307 aa)) constitute a PKS/mFAS DH domain. H1335 acts as the Proton acceptor; for dehydratase activity in catalysis. Positions 1460-1608 (TYRFSKGMIY…LQGVPKRLMH (149 aa)) are C-terminal hotdog fold. The active-site Proton donor; for dehydratase activity is the D1520. The segment at 1617–1666 (KASGPPTEKKTSSPPVEKKASAPVAPTRPAIQRKNASIPPPATQVTPQNK) is disordered. Positions 1623–1636 (TEKKTSSPPVEKKA) are enriched in basic and acidic residues. Carrier domains are found at residues 1671-1748 (PSVS…TRLS) and 1775-1857 (DPSP…SGST). Residues S1708 and S1816 each carry the O-(pantetheine 4'-phosphoryl)serine modification. Positions 1856-1867 (STESFDSTTTKP) are enriched in polar residues. Residues 1856–1923 (STESFDSTTT…PPKGRIPPAW (68 aa)) are disordered. Positions 1872-1887 (ATPPLTDSSASSPPSS) are enriched in low complexity. A thioesterase (TE) domain region spans residues 1937 to 2187 (ILFLFPDGAG…SGAQMLVEHM (251 aa)).

Pantetheine 4'-phosphate serves as cofactor.

The enzyme catalyses 6 malonyl-CoA + acetyl-CoA + 6 H(+) = nor-toralactone + 6 CO2 + 7 CoA + 2 H2O. Its pathway is mycotoxin biosynthesis. In terms of biological role, polyketide synthase; part of the gene cluster that mediates the biosynthesis of cercosporin, a light-activated, non-host-selective toxin. The perylenequinone chromophore of cercosporin absorbs light energy to attain an electronically-activated triplet state and produces active oxygen species such as the hydroxyl radical, superoxide, hydrogen peroxide or singlet oxygen upon reaction with oxygen molecules. These reactive oxygen species cause damage to various cellular components including lipids, proteins and nucleic acids. The first step of cercosporin biosynthesis is performed by the polyketide synthase CTB1 which catalyzes the formation of nor-toralactone. The starter unit acyltransferase (SAT) domain of CTB1 initiates polyketide extension by the selective utilization of acetyl-CoA, which is elongated to the heptaketide in the beta-ketoacyl synthase (KS) domain by successive condensations with six malonyl units introduced by the malonyl acyltransferase (MAT) domain. The product template (PT) domain catalyzes C4-C9 and C2-C11 aldol cyclizations and dehydrations to a trihydroxynaphthalene, which is thought to be delivered to the thioesterase (TE) domain for product release. The bifunctional enzyme CTB3 then methylates nor-toralactone to toralactone before conducting an unusual oxidative aromatic ring opening. The O-methyltransferase CTB2 further methylates the nascent OH-6 of the CBT3 product, blocking further oxidation at this site before the reductase CTB6 reduces the 2-oxopropyl ketone at position C7, giving naphthalene. The FAD-dependent monooxygenase CTB5 in concert with the multicopper oxidase CTB12 are responsible for homodimerization of naphthalene with CTB7 installing the dioxepine moiety, finally producing cercosporin. The fasciclin domain-containing protein CTB11 might act with CTB5 and CTB12 whereas the roles of CTB9 and CTB10 have still to be elucidated. In Cercospora nicotianae (Barn spot disease fungus), this protein is Non-reducing polyketide synthase CTB1.